A 314-amino-acid polypeptide reads, in one-letter code: DegV domain-containing protein XAC3508 (314 aa).

Residues 3 to 307 (IGIVVDSACD…KGALAVGFAA (305 aa)) form the DegV domain. 2 residues coordinate hexadecanoate: Thr-63 and Ser-96.

Functionally, may bind long-chain fatty acids, such as palmitate, and may play a role in lipid transport or fatty acid metabolism. The polypeptide is DegV domain-containing protein XAC3508 (Xanthomonas axonopodis pv. citri (strain 306)).